A 323-amino-acid polypeptide reads, in one-letter code: tRNA-dihydrouridine(20/20a) synthase (323 aa).

FMN is bound by residues 14 to 16 (PML) and Gln66. Catalysis depends on Cys96, which acts as the Proton donor. FMN contacts are provided by residues Lys135, His166, 206 to 208 (NGG), and 228 to 229 (GR).

It belongs to the Dus family. DusA subfamily. FMN is required as a cofactor.

It carries out the reaction 5,6-dihydrouridine(20) in tRNA + NADP(+) = uridine(20) in tRNA + NADPH + H(+). The catalysed reaction is 5,6-dihydrouridine(20) in tRNA + NAD(+) = uridine(20) in tRNA + NADH + H(+). The enzyme catalyses 5,6-dihydrouridine(20a) in tRNA + NADP(+) = uridine(20a) in tRNA + NADPH + H(+). It catalyses the reaction 5,6-dihydrouridine(20a) in tRNA + NAD(+) = uridine(20a) in tRNA + NADH + H(+). Functionally, catalyzes the synthesis of 5,6-dihydrouridine (D), a modified base found in the D-loop of most tRNAs, via the reduction of the C5-C6 double bond in target uridines. Specifically modifies U20 and U20a in tRNAs. This is tRNA-dihydrouridine(20/20a) synthase from Haemophilus ducreyi (strain 35000HP / ATCC 700724).